Consider the following 365-residue polypeptide: Putative glutamate--cysteine ligase 2-2 (365 aa).

The protein belongs to the glutamate--cysteine ligase type 2 family. YbdK subfamily.

The catalysed reaction is L-cysteine + L-glutamate + ATP = gamma-L-glutamyl-L-cysteine + ADP + phosphate + H(+). ATP-dependent carboxylate-amine ligase which exhibits weak glutamate--cysteine ligase activity. The polypeptide is Putative glutamate--cysteine ligase 2-2 (Mycolicibacterium vanbaalenii (strain DSM 7251 / JCM 13017 / BCRC 16820 / KCTC 9966 / NRRL B-24157 / PYR-1) (Mycobacterium vanbaalenii)).